A 417-amino-acid chain; its full sequence is UPF0761 membrane protein Veis_3782 (417 aa).

The next 6 membrane-spanning stretches (helical) occupy residues Ile-54–Phe-74, Gly-111–Ile-131, Val-151–Leu-171, Phe-192–Tyr-212, Gly-226–Gly-246, and Leu-261–Val-281.

It belongs to the UPF0761 family.

The protein localises to the cell inner membrane. This Verminephrobacter eiseniae (strain EF01-2) protein is UPF0761 membrane protein Veis_3782.